A 351-amino-acid chain; its full sequence is Holliday junction branch migration complex subunit RuvB (351 aa).

Residues 1 to 186 form a large ATPase domain (RuvB-L) region; it reads MDEKIETRLI…FGIVQRLEFY (186 aa). ATP contacts are provided by residues Ile25, Arg26, Gly67, Lys70, Thr71, Thr72, 133-135, Arg176, Tyr186, and Arg223; that span reads EDF. Thr71 serves as a coordination point for Mg(2+). Residues 187–257 are small ATPAse domain (RuvB-S); sequence RIPDLIHIVK…IAKEALDLLN (71 aa). Residues 260–351 are head domain (RuvB-H); the sequence is IRGLDVMDRK…ENFDLLGKVE (92 aa). 3 residues coordinate DNA: Arg296, Arg315, and Arg320.

It belongs to the RuvB family. Homohexamer. Forms an RuvA(8)-RuvB(12)-Holliday junction (HJ) complex. HJ DNA is sandwiched between 2 RuvA tetramers; dsDNA enters through RuvA and exits via RuvB. An RuvB hexamer assembles on each DNA strand where it exits the tetramer. Each RuvB hexamer is contacted by two RuvA subunits (via domain III) on 2 adjacent RuvB subunits; this complex drives branch migration. In the full resolvosome a probable DNA-RuvA(4)-RuvB(12)-RuvC(2) complex forms which resolves the HJ.

The protein resides in the cytoplasm. It catalyses the reaction ATP + H2O = ADP + phosphate + H(+). In terms of biological role, the RuvA-RuvB-RuvC complex processes Holliday junction (HJ) DNA during genetic recombination and DNA repair, while the RuvA-RuvB complex plays an important role in the rescue of blocked DNA replication forks via replication fork reversal (RFR). RuvA specifically binds to HJ cruciform DNA, conferring on it an open structure. The RuvB hexamer acts as an ATP-dependent pump, pulling dsDNA into and through the RuvAB complex. RuvB forms 2 homohexamers on either side of HJ DNA bound by 1 or 2 RuvA tetramers; 4 subunits per hexamer contact DNA at a time. Coordinated motions by a converter formed by DNA-disengaged RuvB subunits stimulates ATP hydrolysis and nucleotide exchange. Immobilization of the converter enables RuvB to convert the ATP-contained energy into a lever motion, pulling 2 nucleotides of DNA out of the RuvA tetramer per ATP hydrolyzed, thus driving DNA branch migration. The RuvB motors rotate together with the DNA substrate, which together with the progressing nucleotide cycle form the mechanistic basis for DNA recombination by continuous HJ branch migration. Branch migration allows RuvC to scan DNA until it finds its consensus sequence, where it cleaves and resolves cruciform DNA. This is Holliday junction branch migration complex subunit RuvB from Coxiella burnetii (strain RSA 331 / Henzerling II).